Here is a 130-residue protein sequence, read N- to C-terminus: Arginine decarboxylase proenzyme (130 aa).

The active-site Schiff-base intermediate with substrate; via pyruvic acid is the serine 78. Serine 78 bears the Pyruvic acid (Ser); by autocatalysis mark. Histidine 83 (proton acceptor; for processing activity) is an active-site residue. Catalysis depends on cysteine 98, which acts as the Proton donor; for catalytic activity.

This sequence belongs to the prokaryotic AdoMetDC family. Type 1 subfamily. Heterooctamer of four alpha and four beta chains arranged as a tetramer of alpha/beta heterodimers. Requires pyruvate as cofactor. In terms of processing, is synthesized initially as an inactive proenzyme. Formation of the active enzyme involves a self-maturation process in which the active site pyruvoyl group is generated from an internal serine residue via an autocatalytic post-translational modification. Two non-identical subunits are generated from the proenzyme in this reaction, and the pyruvate is formed at the N-terminus of the alpha chain, which is derived from the carboxyl end of the proenzyme. The post-translation cleavage follows an unusual pathway, termed non-hydrolytic serinolysis, in which the side chain hydroxyl group of the serine supplies its oxygen atom to form the C-terminus of the beta chain, while the remainder of the serine residue undergoes an oxidative deamination to produce ammonia and the pyruvoyl group blocking the N-terminus of the alpha chain.

The enzyme catalyses L-arginine + H(+) = agmatine + CO2. It participates in amine and polyamine biosynthesis; agmatine biosynthesis; agmatine from L-arginine: step 1/1. Its function is as follows. Specifically catalyzes the decarboxylation of L-arginine to agmatine. Has no S-adenosylmethionine decarboxylase (AdoMetDC) activity. This chain is Arginine decarboxylase proenzyme, found in Sulfolobus acidocaldarius (strain ATCC 33909 / DSM 639 / JCM 8929 / NBRC 15157 / NCIMB 11770).